The sequence spans 448 residues: Phosphoglucosamine mutase (448 aa).

Catalysis depends on Ser100, which acts as the Phosphoserine intermediate. Positions 100, 240, 242, and 244 each coordinate Mg(2+). Position 100 is a phosphoserine (Ser100).

Belongs to the phosphohexose mutase family. Mg(2+) serves as cofactor. In terms of processing, activated by phosphorylation.

The catalysed reaction is alpha-D-glucosamine 1-phosphate = D-glucosamine 6-phosphate. Functionally, catalyzes the conversion of glucosamine-6-phosphate to glucosamine-1-phosphate. The protein is Phosphoglucosamine mutase of Bacillus anthracis (strain A0248).